We begin with the raw amino-acid sequence, 287 residues long: Pantothenate synthetase (287 aa).

30 to 37 serves as a coordination point for ATP; the sequence is MGNLHSGH. His37 acts as the Proton donor in catalysis. Residue Gln61 participates in (R)-pantoate binding. Gln61 provides a ligand contact to beta-alanine. 149–152 serves as a coordination point for ATP; that stretch reads GEKD. Gln155 lines the (R)-pantoate pocket. Residues Val178 and 186-189 contribute to the ATP site; that span reads LSSR.

This sequence belongs to the pantothenate synthetase family. In terms of assembly, homodimer.

The protein localises to the cytoplasm. It catalyses the reaction (R)-pantoate + beta-alanine + ATP = (R)-pantothenate + AMP + diphosphate + H(+). The protein operates within cofactor biosynthesis; (R)-pantothenate biosynthesis; (R)-pantothenate from (R)-pantoate and beta-alanine: step 1/1. Its function is as follows. Catalyzes the condensation of pantoate with beta-alanine in an ATP-dependent reaction via a pantoyl-adenylate intermediate. In Pseudomonas putida (strain GB-1), this protein is Pantothenate synthetase.